The sequence spans 176 residues: Large ribosomal subunit protein uL6 (176 aa).

Belongs to the universal ribosomal protein uL6 family. Part of the 50S ribosomal subunit.

This protein binds to the 23S rRNA, and is important in its secondary structure. It is located near the subunit interface in the base of the L7/L12 stalk, and near the tRNA binding site of the peptidyltransferase center. The chain is Large ribosomal subunit protein uL6 from Lactobacillus acidophilus (strain ATCC 700396 / NCK56 / N2 / NCFM).